The chain runs to 535 residues: ABC1 family protein C10F6.14c (535 aa).

The protein belongs to the protein kinase superfamily. ADCK protein kinase family.

This is ABC1 family protein C10F6.14c from Schizosaccharomyces pombe (strain 972 / ATCC 24843) (Fission yeast).